Reading from the N-terminus, the 780-residue chain is Zinc finger and SCAN domain-containing protein 10 (780 aa).

The disordered stretch occupies residues 1 to 38 (MLGESVPAAVEQEQLGEVKLEEEEAVSPEDPRRPESRL). The segment covering 29-38 (EDPRRPESRL) has biased composition (basic and acidic residues). The region spanning 56–126 (MGPRASLSRL…LLLEGIHREP (71 aa)) is the SCAN box domain. Disordered regions lie at residues 153-237 (GCAS…SRDQ) and 255-324 (KAWP…GSLL). Residues S162 and S208 each carry the phosphoserine modification. Over residues 202–224 (SSKQPLSPGPQKTFQALQESSPQ) the composition is skewed to polar residues. Residue T268 is modified to Phosphothreonine. Positions 268 to 280 (TPDKEEFKQEEPK) are enriched in basic and acidic residues. C2H2-type zinc fingers lie at residues 347 to 370 (FICA…LRSH), 376 to 398 (FLCL…MRTH), 404 to 426 (HACH…LLTH), 432 to 454 (FLCA…LLAH), 476 to 498 (VLCS…LRIH), 522 to 544 (FVCS…RRVH), 550 to 572 (FSCQ…QRVH), 578 to 600 (YACP…LLTH), 606 to 628 (HHCT…QRSH), 634 to 656 (CRCS…QRIH), 662 to 684 (HACD…RRSH), 690 to 712 (YSCQ…LATH), 724 to 746 (QECV…LLVH), and 752 to 774 (YSCT…LRTH). Q483 carries the N5-methylglutamine modification. Residues 492–520 (KRHLRIHARDKDRRSSEGSGSRRRDSDRR) form a disordered region. A compositionally biased stretch (basic and acidic residues) spans 498 to 520 (HARDKDRRSSEGSGSRRRDSDRR).

Interacts with POU5F1/OCT4 and SOX2. Post-translationally, methylated at Gln-483 by N6AMT1.

It localises to the nucleus. Functionally, embryonic stem (ES) cell-specific transcription factor required to maintain ES cell pluripotency. Can both activate and /or repress expression of target genes, depending on the context. Specifically binds the 5'-[GA]CGCNNGCG[CT]-3' DNA consensus sequence. Regulates expression of POU5F1/OCT4, ZSCAN4 and ALYREF/THOC4. In Homo sapiens (Human), this protein is Zinc finger and SCAN domain-containing protein 10 (ZSCAN10).